A 210-amino-acid chain; its full sequence is Beta-crystallin A4 (210 aa).

The segment at 1 to 25 is N-terminal arm; sequence MSGMFSGSISETSGMSLQCTKSAGH. 2 consecutive Beta/gamma crystallin 'Greek key' domains span residues 26-65 and 66-112; these read WKIV…KVLS and GAWV…RPVA. A connecting peptide region spans residues 113–118; the sequence is CANHRD. 2 Beta/gamma crystallin 'Greek key' domains span residues 119 to 160 and 161 to 209; these read SRLT…HVHS and GAWV…RRIQ.

Belongs to the beta/gamma-crystallin family. In terms of assembly, homo/heterodimer, or complexes of higher-order. The structure of beta-crystallin oligomers seems to be stabilized through interactions between the N-terminal arms.

Its function is as follows. Crystallins are the dominant structural components of the vertebrate eye lens. The sequence is that of Beta-crystallin A4 (CRYBA4) from Bos taurus (Bovine).